We begin with the raw amino-acid sequence, 794 residues long: Phenylalanine--tRNA ligase beta subunit (794 aa).

The 119-residue stretch at 40 to 158 folds into the tRNA-binding domain; the sequence is NSLNSELVLG…LKKYLGKDVK (119 aa). The region spanning 402–477 is the B5 domain; it reads KNKTEFEIKI…RLYSYDNIQE (76 aa). Residues Asp455, Asp461, Glu464, and Glu465 each contribute to the Mg(2+) site. The region spanning 702 to 794 is the FDX-ACB domain; it reads SKFQSSSRDL…NVKKMKVVIR (93 aa).

This sequence belongs to the phenylalanyl-tRNA synthetase beta subunit family. Type 1 subfamily. In terms of assembly, tetramer of two alpha and two beta subunits. Requires Mg(2+) as cofactor.

The protein localises to the cytoplasm. The catalysed reaction is tRNA(Phe) + L-phenylalanine + ATP = L-phenylalanyl-tRNA(Phe) + AMP + diphosphate + H(+). This chain is Phenylalanine--tRNA ligase beta subunit, found in Mycoplasma capricolum subsp. capricolum (strain California kid / ATCC 27343 / NCTC 10154).